The chain runs to 150 residues: Small ribosomal subunit protein uS11 (150 aa).

The disordered stretch occupies residues 126 to 150 (GRIEDVTPTPSDSTRRKGGRRGRRL). A compositionally biased stretch (basic residues) spans 141-150 (RKGGRRGRRL).

It belongs to the universal ribosomal protein uS11 family. As to quaternary structure, component of the small ribosomal subunit (SSU). Mature N.crassa ribosomes consist of a small (40S) and a large (60S) subunit. The 40S small subunit contains 1 molecule of ribosomal RNA (18S rRNA) and at least 32 different proteins. The large 60S subunit contains 3 rRNA molecules (26S, 5.8S and 5S rRNA) and at least 42 different proteins.

It is found in the cytoplasm. Component of the ribosome, a large ribonucleoprotein complex responsible for the synthesis of proteins in the cell. The small ribosomal subunit (SSU) binds messenger RNAs (mRNAs) and translates the encoded message by selecting cognate aminoacyl-transfer RNA (tRNA) molecules. The large subunit (LSU) contains the ribosomal catalytic site termed the peptidyl transferase center (PTC), which catalyzes the formation of peptide bonds, thereby polymerizing the amino acids delivered by tRNAs into a polypeptide chain. The nascent polypeptides leave the ribosome through a tunnel in the LSU and interact with protein factors that function in enzymatic processing, targeting, and the membrane insertion of nascent chains at the exit of the ribosomal tunnel. uS11 is involved in nucleolar processing of pre-18S ribosomal RNA and ribosome assembly. In Neurospora crassa (strain ATCC 24698 / 74-OR23-1A / CBS 708.71 / DSM 1257 / FGSC 987), this protein is Small ribosomal subunit protein uS11 (rps-14).